We begin with the raw amino-acid sequence, 287 residues long: ATP synthase gamma chain (287 aa).

The protein belongs to the ATPase gamma chain family. As to quaternary structure, F-type ATPases have 2 components, CF(1) - the catalytic core - and CF(0) - the membrane proton channel. CF(1) has five subunits: alpha(3), beta(3), gamma(1), delta(1), epsilon(1). CF(0) has three main subunits: a, b and c.

The protein localises to the cell inner membrane. Functionally, produces ATP from ADP in the presence of a proton gradient across the membrane. The gamma chain is believed to be important in regulating ATPase activity and the flow of protons through the CF(0) complex. In Serratia proteamaculans (strain 568), this protein is ATP synthase gamma chain.